Reading from the N-terminus, the 337-residue chain is MRVLGIETSCDETGIAIYDDEKGLLANQLYSQVKLHADYGGVVPELASRDHVRKTVPLIQAALKESGLTAKDIDAVAYTAGPGLVGALLVGATVGRSLAFAWDVPAIPVHHMEGHLLAPMLEDNPPEFPFVALLVSGGHTQLISVTGIGQYELLGESIDDAAGEAFDKTAKLLGLDYPGGPLLSKMAAQGTAGRFVFPRPMTDRPGLDFSFSGLKTFAANTIRDNGTDDQTRADIARAFEDAVVDTLMIKCKRALEQTGFKRLVMAGGVSANRTLRAKLAEMMKKRRGEVFYARPEFCTDNGAMIAYAGMVRFKAGATADLGVSVRPRWPLAELPAA.

Residues histidine 111 and histidine 115 each contribute to the Fe cation site. Residues 134–138, aspartate 167, glycine 180, and asparagine 272 each bind substrate; that span reads LVSGG. Aspartate 300 lines the Fe cation pocket.

Belongs to the KAE1 / TsaD family. Fe(2+) is required as a cofactor.

It localises to the cytoplasm. The catalysed reaction is L-threonylcarbamoyladenylate + adenosine(37) in tRNA = N(6)-L-threonylcarbamoyladenosine(37) in tRNA + AMP + H(+). In terms of biological role, required for the formation of a threonylcarbamoyl group on adenosine at position 37 (t(6)A37) in tRNAs that read codons beginning with adenine. Is involved in the transfer of the threonylcarbamoyl moiety of threonylcarbamoyl-AMP (TC-AMP) to the N6 group of A37, together with TsaE and TsaB. TsaD likely plays a direct catalytic role in this reaction. This chain is tRNA N6-adenosine threonylcarbamoyltransferase, found in Escherichia coli O127:H6 (strain E2348/69 / EPEC).